Reading from the N-terminus, the 257-residue chain is UPF0246 protein HAPS_0280 (257 aa).

Belongs to the UPF0246 family.

This chain is UPF0246 protein HAPS_0280, found in Glaesserella parasuis serovar 5 (strain SH0165) (Haemophilus parasuis).